Reading from the N-terminus, the 962-residue chain is Glycine dehydrogenase (decarboxylating) (962 aa).

Lys709 carries the N6-(pyridoxal phosphate)lysine modification.

This sequence belongs to the GcvP family. In terms of assembly, the glycine cleavage system is composed of four proteins: P, T, L and H. Requires pyridoxal 5'-phosphate as cofactor.

The enzyme catalyses N(6)-[(R)-lipoyl]-L-lysyl-[glycine-cleavage complex H protein] + glycine + H(+) = N(6)-[(R)-S(8)-aminomethyldihydrolipoyl]-L-lysyl-[glycine-cleavage complex H protein] + CO2. Its function is as follows. The glycine cleavage system catalyzes the degradation of glycine. The P protein binds the alpha-amino group of glycine through its pyridoxal phosphate cofactor; CO(2) is released and the remaining methylamine moiety is then transferred to the lipoamide cofactor of the H protein. The protein is Glycine dehydrogenase (decarboxylating) of Shewanella baltica (strain OS223).